The following is a 351-amino-acid chain: Anthranilate phosphoribosyltransferase (351 aa).

5-phospho-alpha-D-ribose 1-diphosphate contacts are provided by residues Gly-92, 95-96 (GD), Thr-100, 102-105 (NIST), 120-128 (KHGNRAASS), and Ser-132. Residue Gly-92 participates in anthranilate binding. A Mg(2+)-binding site is contributed by Ser-104. Asn-123 is a binding site for anthranilate. Residue Arg-178 coordinates anthranilate. Positions 236 and 237 each coordinate Mg(2+).

It belongs to the anthranilate phosphoribosyltransferase family. As to quaternary structure, homodimer. The cofactor is Mg(2+).

It carries out the reaction N-(5-phospho-beta-D-ribosyl)anthranilate + diphosphate = 5-phospho-alpha-D-ribose 1-diphosphate + anthranilate. It functions in the pathway amino-acid biosynthesis; L-tryptophan biosynthesis; L-tryptophan from chorismate: step 2/5. Catalyzes the transfer of the phosphoribosyl group of 5-phosphorylribose-1-pyrophosphate (PRPP) to anthranilate to yield N-(5'-phosphoribosyl)-anthranilate (PRA). This Deinococcus geothermalis (strain DSM 11300 / CIP 105573 / AG-3a) protein is Anthranilate phosphoribosyltransferase.